A 210-amino-acid chain; its full sequence is Thiamine-phosphate synthase (210 aa).

4-amino-2-methyl-5-(diphosphooxymethyl)pyrimidine contacts are provided by residues 39–43 (QLREK) and asparagine 71. Residues aspartate 72 and aspartate 91 each contribute to the Mg(2+) site. Serine 110 contacts 4-amino-2-methyl-5-(diphosphooxymethyl)pyrimidine. Position 134–136 (134–136 (TPT)) interacts with 2-[(2R,5Z)-2-carboxy-4-methylthiazol-5(2H)-ylidene]ethyl phosphate. Residue lysine 137 coordinates 4-amino-2-methyl-5-(diphosphooxymethyl)pyrimidine. Glycine 163 lines the 2-[(2R,5Z)-2-carboxy-4-methylthiazol-5(2H)-ylidene]ethyl phosphate pocket.

Belongs to the thiamine-phosphate synthase family. Mg(2+) serves as cofactor.

The catalysed reaction is 2-[(2R,5Z)-2-carboxy-4-methylthiazol-5(2H)-ylidene]ethyl phosphate + 4-amino-2-methyl-5-(diphosphooxymethyl)pyrimidine + 2 H(+) = thiamine phosphate + CO2 + diphosphate. It carries out the reaction 2-(2-carboxy-4-methylthiazol-5-yl)ethyl phosphate + 4-amino-2-methyl-5-(diphosphooxymethyl)pyrimidine + 2 H(+) = thiamine phosphate + CO2 + diphosphate. The enzyme catalyses 4-methyl-5-(2-phosphooxyethyl)-thiazole + 4-amino-2-methyl-5-(diphosphooxymethyl)pyrimidine + H(+) = thiamine phosphate + diphosphate. The protein operates within cofactor biosynthesis; thiamine diphosphate biosynthesis; thiamine phosphate from 4-amino-2-methyl-5-diphosphomethylpyrimidine and 4-methyl-5-(2-phosphoethyl)-thiazole: step 1/1. Functionally, condenses 4-methyl-5-(beta-hydroxyethyl)thiazole monophosphate (THZ-P) and 2-methyl-4-amino-5-hydroxymethyl pyrimidine pyrophosphate (HMP-PP) to form thiamine monophosphate (TMP). The protein is Thiamine-phosphate synthase of Campylobacter jejuni subsp. jejuni serotype O:2 (strain ATCC 700819 / NCTC 11168).